The following is a 438-amino-acid chain: Glycerophosphocholine cholinephosphodiesterase ENPP6 (438 aa).

A signal peptide spans 1-22; it reads MTRTLLKIYTLFILLLCRQRDA. Substrate-binding residues include Asp32, Ser69, and Asn90. Zn(2+)-binding residues include Asp32 and Ser69. Residue Ser69 is the Nucleophile of the active site. Ser69 is subject to Phosphoserine. Cys140 and Cys152 are joined by a disulfide. A coiled-coil region spans residues 162 to 226; it reads KNLTDSMENA…ILNQKIREKN (65 aa). The N-linked (GlcNAc...) asparagine glycan is linked to Asn163. Asp191 serves as a coordination point for substrate. Residues Asp191, His195, Asp238, and His239 each contribute to the Zn(2+) site. His239 serves as a coordination point for substrate. N-linked (GlcNAc...) asparagine glycans are attached at residues Asn258, Asn287, and Asn339. His352 provides a ligand contact to substrate. His352 is a Zn(2+) binding site. Asn402 carries an N-linked (GlcNAc...) asparagine glycan. Residue Ser415 is the site of GPI-anchor amidated serine attachment. Residues 416-438 constitute a propeptide, removed in mature form; that stretch reads AATAGASLISCCFLLLLTLTGVC.

Belongs to the nucleotide pyrophosphatase/phosphodiesterase family. Zn(2+) is required as a cofactor.

Its subcellular location is the cell membrane. The enzyme catalyses sn-glycerol 3-phosphocholine + H2O = phosphocholine + glycerol + H(+). It catalyses the reaction a 1-acyl-sn-glycero-3-phosphocholine + H2O = a 1-acyl-sn-glycerol + phosphocholine + H(+). It carries out the reaction a 1-O-alkyl-sn-glycero-3-phosphocholine + H2O = a 1-O-alkyl-sn-glycerol + phosphocholine + H(+). The catalysed reaction is 1-dodecanoyl-sn-glycero-3-phosphocholine + H2O = 1-dodecanoyl-sn-glycerol + phosphocholine + H(+). The enzyme catalyses 1-hexadecanoyl-sn-glycero-3-phosphocholine + H2O = 1-hexadecanoyl-sn-glycerol + phosphocholine + H(+). It catalyses the reaction 1-(5Z,8Z,11Z,14Z-eicosatetraenoyl)-sn-glycero-3-phosphocholine + H2O = 1-(5Z,8Z,11Z,14Z-eicosatetraenoyl)-sn-glycerol + phosphocholine + H(+). It carries out the reaction 1-tetradecanoyl-sn-glycero-3-phosphocholine + H2O = 1-tetradecanoyl-sn-glycerol + phosphocholine + H(+). The catalysed reaction is sphing-4-enine-phosphocholine + H2O = sphing-4-enine + phosphocholine + H(+). The enzyme catalyses 1-(9Z-octadecenoyl)-sn-glycero-3-phosphocholine + H2O = 1-(9Z-octadecenoyl)-sn-glycerol + phosphocholine + H(+). It catalyses the reaction 1-(9Z,12Z)-octadecadienoyl-sn-glycero-3-phosphocholine + H2O = 1-(9Z,12Z-octadecadienoyl)-sn-glycerol + phosphocholine + H(+). It carries out the reaction glycero-2-phosphocholine + H2O = phosphocholine + glycerol + H(+). In terms of biological role, choline-specific glycerophosphodiesterase that hydrolyzes glycerophosphocholine (GPC) and lysophosphatidylcholine (LPC) and contributes to supplying choline to the cells. Has a preference for LPC with short (12:0 and 14:0) or polyunsaturated (18:2 and 20:4) fatty acids. In vitro, hydrolyzes only choline-containing lysophospholipids, such as sphingosylphosphorylcholine (SPC), platelet-activating factor (PAF) and lysoPAF, but not other lysophospholipids. This chain is Glycerophosphocholine cholinephosphodiesterase ENPP6, found in Danio rerio (Zebrafish).